The chain runs to 441 residues: S-adenosylmethionine synthase 1 (441 aa).

Glu9 serves as a coordination point for Mg(2+). ATP is bound at residue His15. Glu43 contacts K(+). Residues Glu56 and Gln99 each contribute to the L-methionine site. ATP-binding positions include 167-169, 235-238, Asp246, 252-253, Ala269, Lys273, and Lys277; these read DGK, SGRF, and RK. Asp246 is a binding site for L-methionine. Residue Lys277 participates in L-methionine binding.

Belongs to the AdoMet synthase family. In terms of assembly, homotetramer. Mn(2+) serves as cofactor. Mg(2+) is required as a cofactor. Requires Co(2+) as cofactor. The cofactor is K(+).

It localises to the cytoplasm. The enzyme catalyses L-methionine + ATP + H2O = S-adenosyl-L-methionine + phosphate + diphosphate. It functions in the pathway amino-acid biosynthesis; S-adenosyl-L-methionine biosynthesis; S-adenosyl-L-methionine from L-methionine: step 1/1. Catalyzes the formation of S-adenosylmethionine from methionine and ATP. The reaction comprises two steps that are both catalyzed by the same enzyme: formation of S-adenosylmethionine (AdoMet) and triphosphate, and subsequent hydrolysis of the triphosphate. In Daucus carota (Wild carrot), this protein is S-adenosylmethionine synthase 1 (SAMS1).